The following is a 189-amino-acid chain: Shikimate kinase (189 aa).

Position 11-16 (11-16 (GTGKSA)) interacts with ATP. Ser15 contacts Mg(2+). Substrate is bound by residues Asp33, Arg57, and Gly79. Position 117 (Arg117) interacts with ATP. Substrate is bound at residue Arg135.

Belongs to the shikimate kinase family. In terms of assembly, monomer. Mg(2+) serves as cofactor.

It localises to the cytoplasm. It catalyses the reaction shikimate + ATP = 3-phosphoshikimate + ADP + H(+). It functions in the pathway metabolic intermediate biosynthesis; chorismate biosynthesis; chorismate from D-erythrose 4-phosphate and phosphoenolpyruvate: step 5/7. Catalyzes the specific phosphorylation of the 3-hydroxyl group of shikimic acid using ATP as a cosubstrate. This Desulforudis audaxviator (strain MP104C) protein is Shikimate kinase.